A 458-amino-acid polypeptide reads, in one-letter code: ATP synthase subunit beta (458 aa).

147-154 (GGAGVGKT) is an ATP binding site.

This sequence belongs to the ATPase alpha/beta chains family. F-type ATPases have 2 components, CF(1) - the catalytic core - and CF(0) - the membrane proton channel. CF(1) has five subunits: alpha(3), beta(3), gamma(1), delta(1), epsilon(1). CF(0) has three main subunits: a(1), b(2) and c(9-12). The alpha and beta chains form an alternating ring which encloses part of the gamma chain. CF(1) is attached to CF(0) by a central stalk formed by the gamma and epsilon chains, while a peripheral stalk is formed by the delta and b chains.

The protein localises to the cell inner membrane. The catalysed reaction is ATP + H2O + 4 H(+)(in) = ADP + phosphate + 5 H(+)(out). In terms of biological role, produces ATP from ADP in the presence of a proton gradient across the membrane. The catalytic sites are hosted primarily by the beta subunits. The sequence is that of ATP synthase subunit beta from Chromohalobacter salexigens (strain ATCC BAA-138 / DSM 3043 / CIP 106854 / NCIMB 13768 / 1H11).